The chain runs to 913 residues: Proline and serine-rich protein 1 (913 aa).

Met1 is subject to N-acetylmethionine. 4 disordered regions span residues 233 to 291 (VPPP…PAVS), 488 to 507 (ASLS…ATNK), 592 to 618 (SEPT…TLGL), and 888 to 913 (DGFP…SGWQ). Residues 251-275 (LSSQSKPTQSQTFSTPASQLFSPHG) are compositionally biased toward polar residues. The segment covering 276-291 (SSNPSTPAATPVPAVS) has biased composition (low complexity). Residues 488–506 (ASLSSLPNRNSDSPASATN) are compositionally biased toward polar residues. Over residues 893–913 (YPSTPGTPFSLQTGLSQSGWQ) the composition is skewed to polar residues.

As to quaternary structure, interacts with TET2 and OGT; this interaction mediates TET2 O-GlcNAcylation and stability by promoting the interaction between OGT and TET2. Interacts with KDM6A. Interacts with TET1. Post-translationally, glycosylated. Interaction with OGT leads to GlcNAcylation.

In terms of biological role, mediates OGT interaction with and O-GlcNAcylation of TET2 to control TET2 stabilization at enhancers and CpG islands (CGIs). The chain is Proline and serine-rich protein 1 from Mus musculus (Mouse).